The chain runs to 171 residues: Regulatory protein RecX (171 aa).

The protein belongs to the RecX family.

The protein resides in the cytoplasm. Functionally, modulates RecA activity. This chain is Regulatory protein RecX, found in Mycobacterium leprae (strain Br4923).